A 319-amino-acid polypeptide reads, in one-letter code: Probable cytochrome c oxidase subunit 2 (319 aa).

The first 33 residues, 1–33 (MSPNGSDRSPRRPMRRKLLQALTAGLVLATATG), serve as a signal peptide directing secretion. Transmembrane regions (helical) follow at residues 63 to 83 (WAAA…SVFF) and 101 to 121 (LPIE…LFYF). Cu cation-binding residues include His-227, Cys-262, Cys-266, and His-270.

This sequence belongs to the cytochrome c oxidase subunit 2 family. It depends on Cu cation as a cofactor. Heme serves as cofactor.

The protein localises to the cell membrane. The enzyme catalyses 4 Fe(II)-[cytochrome c] + O2 + 8 H(+)(in) = 4 Fe(III)-[cytochrome c] + 2 H2O + 4 H(+)(out). In terms of biological role, subunits I and II form the functional core of the enzyme complex. Electrons originating in cytochrome c are transferred via heme a and Cu(A) to the binuclear center formed by heme a3 and Cu(B). The polypeptide is Probable cytochrome c oxidase subunit 2 (ctaC) (Streptomyces coelicolor (strain ATCC BAA-471 / A3(2) / M145)).